Reading from the N-terminus, the 1362-residue chain is ATP-dependent RNA helicase dhx29 (1362 aa).

Basic residues predominate over residues 1–10; sequence MGGKNKKNRH. The disordered stretch occupies residues 1 to 76; sequence MGGKNKKNRH…FASSSDSGVS (76 aa). The span at 18-27 shows a compositional bias: low complexity; that stretch reads GATAAANRPR. Residues 28–41 show a composition bias toward basic and acidic residues; that stretch reads AAAEPRPGGEDAAK. Residues 66-76 are compositionally biased toward low complexity; the sequence is SFASSSDSGVS. The stretch at 89–109 forms a coiled coil; it reads EAKLEKRIISLINEHKKLNSN. Disordered stretches follow at residues 182 to 215 and 229 to 257; these read QRAR…LKGN and EQGS…DPNE. Positions 231–242 are enriched in acidic residues; the sequence is GSDDDDDDDDVK. The segment covering 243-257 has biased composition (basic and acidic residues); the sequence is EEEKETTLEKFDPNE. Positions 285–305 form a coiled coil; the sequence is QKEAQERIRGYQQEMKSLEDH. The segment at 317–336 is disordered; that stretch reads VKSESKQPKPALPPSEDEPL. Residues 576-749 enclose the Helicase ATP-binding domain; that stretch reads LETLKRHRVI…FTHCPIIRIS (174 aa). 589–596 contacts ATP; it reads GETGSGKS. The short motif at 696–699 is the DEAH box element; the sequence is DEVH. The Helicase C-terminal domain occupies 852–1021; sequence DISPEYRNVE…ELCLHIMKCD (170 aa).

This sequence belongs to the DEAD box helicase family. DEAH subfamily. As to quaternary structure, part of the 43S pre-initiation complex (PIC).

The protein resides in the cytoplasm. The catalysed reaction is ATP + H2O = ADP + phosphate + H(+). Its function is as follows. ATP-binding RNA helicase involved in translation initiation. Part of the 43S pre-initiation complex that is required for efficient initiation on mRNAs of higher eukaryotes with structured 5'-UTRs by promoting efficient NTPase-dependent 48S complex formation. Specifically binds to the 40S ribosome near the mRNA entrance. Does not possess a processive helicase activity. This chain is ATP-dependent RNA helicase dhx29, found in Xenopus laevis (African clawed frog).